Here is a 428-residue protein sequence, read N- to C-terminus: Patatin-like protein 3 (428 aa).

The PNPLA domain occupies 38-252; it reads LSIDGGGIRG…AANNPTLCAI (215 aa). The short motif at 42-47 is the GXGXXG element; it reads GGGIRG. The GXSXG motif lies at 80-84; that stretch reads GTSTG. Catalysis depends on serine 82, which acts as the Nucleophile. Aspartate 239 serves as the catalytic Proton acceptor. The DGA/G motif lies at 239-241; that stretch reads DGG. Residue serine 423 is modified to Phosphoserine.

This sequence belongs to the patatin family. Expressed specifically in the stigma, ovary and funiculus of the ovary.

The protein resides in the cytoplasm. In terms of biological role, possesses non-specific lipolytic acyl hydrolase (LAH) activity. Catalyzes the hydrolysis of the neutral lipids monogalactosyldiacylglycerol (MGDG), digalactosyldiacylglycerol (DGDG) and phosphatidylglycerol (PG), and less efficiently the polar lipids phosphatidylcholine (PC) and phosphatidylinositol (PI), but not the storage lipid triacylglycerol (TAG). May play a role in root development. This Arabidopsis thaliana (Mouse-ear cress) protein is Patatin-like protein 3 (PLP3).